A 400-amino-acid polypeptide reads, in one-letter code: Phosphoglycerate kinase (400 aa).

Residues 19 to 21 (DLN), R38, 61 to 64 (HLGR), R124, and R161 contribute to the substrate site. ATP-binding positions include K211, G299, E330, and 356-359 (GGDS).

Belongs to the phosphoglycerate kinase family. Monomer.

It localises to the cytoplasm. The catalysed reaction is (2R)-3-phosphoglycerate + ATP = (2R)-3-phospho-glyceroyl phosphate + ADP. The protein operates within carbohydrate degradation; glycolysis; pyruvate from D-glyceraldehyde 3-phosphate: step 2/5. The protein is Phosphoglycerate kinase of Frankia alni (strain DSM 45986 / CECT 9034 / ACN14a).